We begin with the raw amino-acid sequence, 376 residues long: Ribonucleoside-diphosphate reductase subunit beta (376 aa).

3 residues coordinate Fe cation: D85, E116, and H119. Residue Y123 is part of the active site. Residues E205, E239, and H242 each contribute to the Fe cation site.

The protein belongs to the ribonucleoside diphosphate reductase small chain family. As to quaternary structure, tetramer of two alpha and two beta subunits. Fe cation is required as a cofactor.

It carries out the reaction a 2'-deoxyribonucleoside 5'-diphosphate + [thioredoxin]-disulfide + H2O = a ribonucleoside 5'-diphosphate + [thioredoxin]-dithiol. Its function is as follows. Provides the precursors necessary for DNA synthesis. Catalyzes the biosynthesis of deoxyribonucleotides from the corresponding ribonucleotides. This is Ribonucleoside-diphosphate reductase subunit beta (nrdB) from Haemophilus influenzae (strain ATCC 51907 / DSM 11121 / KW20 / Rd).